We begin with the raw amino-acid sequence, 208 residues long: Cytochrome c oxidase assembly protein CtaG (208 aa).

The Cytoplasmic segment spans residues 1–19; sequence MSPPLPQAPQQPAPRRGLG. Residues 20-42 traverse the membrane as a helical; Signal-anchor for type II membrane protein segment; the sequence is HDTAVAAVCGLVVALMVGASFAA. Topologically, residues 43–208 are periplasmic; it reads VPFYNWFCRT…SEPAPRKGNL (166 aa).

This sequence belongs to the COX11/CtaG family.

Its subcellular location is the cell inner membrane. Exerts its effect at some terminal stage of cytochrome c oxidase synthesis, probably by being involved in the insertion of the copper B into subunit I. The chain is Cytochrome c oxidase assembly protein CtaG from Rhodopseudomonas palustris (strain TIE-1).